Consider the following 299-residue polypeptide: Pantothenate synthetase (299 aa).

Residue 41–48 (MGALHEGH) coordinates ATP. H48 acts as the Proton donor in catalysis. (R)-pantoate is bound at residue Q72. Q72 lines the beta-alanine pocket. 158–161 (GQKD) provides a ligand contact to ATP. Residue Q164 coordinates (R)-pantoate. ATP contacts are provided by residues V187 and 195 to 198 (MSSR).

This sequence belongs to the pantothenate synthetase family. In terms of assembly, homodimer.

The protein localises to the cytoplasm. The catalysed reaction is (R)-pantoate + beta-alanine + ATP = (R)-pantothenate + AMP + diphosphate + H(+). Its pathway is cofactor biosynthesis; (R)-pantothenate biosynthesis; (R)-pantothenate from (R)-pantoate and beta-alanine: step 1/1. Catalyzes the condensation of pantoate with beta-alanine in an ATP-dependent reaction via a pantoyl-adenylate intermediate. The sequence is that of Pantothenate synthetase from Acidobacterium capsulatum (strain ATCC 51196 / DSM 11244 / BCRC 80197 / JCM 7670 / NBRC 15755 / NCIMB 13165 / 161).